The sequence spans 526 residues: MSENNGKQFINGQRVAANAPTIESINATDYQPTGYLFSQATLDEVDQAAQAAYQAFLKYQHTTQQQRADFLDEIAIQIENLGSKLQEVAAQETGLPLVRLQGETGRVTGQLRLFAELLRRGDFYGARIDTALPERKPLPRVDLRQYKIGVGPVAVFGASNFPLAFSTAGGDTVAALAAGCSVVFKAHSGHMATAELVAQAIEKAILNSGIPSGTFNMIFGSRVGANLVEHPLIQAAGFTGSLEGGMALFNLAQNRPQPIPFFAEMSSVNPVIVMPEALNARGEKVAQDTVASFNMGCGQFCTKPGLIIGIKSPAFDQFVTALIDTTRTAVPQIMLNQGTLKSYQQGIDALLNEQGFKCIASGQAPELISQAQPHLFQADQSVLLSGNPKLQHEVFGPMSIVIAVDDEATLLNGLEKLAGQLTATIIADESDLPQAKELLNLLTRKAGRVLFNGFPTGVEVSDAMVHGGPFPATSDSRGTSVGTGAIERFLRPVCYQNTSQVLLPDVLKDGNPLHITRLVNGVLTQN.

Residues 159-160 (SN), 185-188 (KAHS), and 240-241 (GS) contribute to the NADP(+) site. Glu-264 (proton acceptor) is an active-site residue. Cys-301 (nucleophile) is an active-site residue. Glu-393 is a binding site for NADP(+).

This sequence belongs to the aldehyde dehydrogenase family.

The catalysed reaction is 2,5-dioxopentanoate + NADP(+) + H2O = 2-oxoglutarate + NADPH + 2 H(+). Its pathway is carbohydrate acid metabolism; D-glucarate degradation. In terms of biological role, catalyzes the NAD(P)(+)-dependent oxidation of alpha-ketoglutaric semialdehyde (alphaKGSA) to alpha-ketoglutarate in the D-glutarate degradation pathway. This is Alpha-ketoglutaric semialdehyde dehydrogenase from Acinetobacter baylyi (strain ATCC 33305 / BD413 / ADP1).